The chain runs to 460 residues: Glutamyl-tRNA reductase (460 aa).

Substrate-binding positions include 48–51, serine 100, 105–107, and glutamine 111; these read TCNR and EDQ. Catalysis depends on cysteine 49, which acts as the Nucleophile. 180–185 provides a ligand contact to NADP(+); sequence GAGEIG.

This sequence belongs to the glutamyl-tRNA reductase family. As to quaternary structure, homodimer.

It carries out the reaction (S)-4-amino-5-oxopentanoate + tRNA(Glu) + NADP(+) = L-glutamyl-tRNA(Glu) + NADPH + H(+). It participates in porphyrin-containing compound metabolism; protoporphyrin-IX biosynthesis; 5-aminolevulinate from L-glutamyl-tRNA(Glu): step 1/2. Functionally, catalyzes the NADPH-dependent reduction of glutamyl-tRNA(Glu) to glutamate 1-semialdehyde (GSA). In Methanosarcina acetivorans (strain ATCC 35395 / DSM 2834 / JCM 12185 / C2A), this protein is Glutamyl-tRNA reductase.